The following is a 585-amino-acid chain: Aspartate--tRNA ligase (585 aa).

Residue glutamate 173 participates in L-aspartate binding. The interval 197-200 (QTLK) is aspartate. An L-aspartate-binding site is contributed by arginine 219. Residues 219–221 (RDE) and glutamine 228 each bind ATP. Histidine 446 lines the L-aspartate pocket. Glutamate 480 is a binding site for ATP. Arginine 487 provides a ligand contact to L-aspartate. 532-535 (GLDR) contributes to the ATP binding site.

This sequence belongs to the class-II aminoacyl-tRNA synthetase family. Type 1 subfamily. In terms of assembly, homodimer.

It localises to the cytoplasm. It catalyses the reaction tRNA(Asp) + L-aspartate + ATP = L-aspartyl-tRNA(Asp) + AMP + diphosphate. In terms of biological role, catalyzes the attachment of L-aspartate to tRNA(Asp) in a two-step reaction: L-aspartate is first activated by ATP to form Asp-AMP and then transferred to the acceptor end of tRNA(Asp). In Parabacteroides distasonis (strain ATCC 8503 / DSM 20701 / CIP 104284 / JCM 5825 / NCTC 11152), this protein is Aspartate--tRNA ligase.